Here is a 152-residue protein sequence, read N- to C-terminus: 3-hydroxyacyl-[acyl-carrier-protein] dehydratase FabZ (152 aa).

H58 is a catalytic residue.

Belongs to the thioester dehydratase family. FabZ subfamily.

It localises to the cytoplasm. The catalysed reaction is a (3R)-hydroxyacyl-[ACP] = a (2E)-enoyl-[ACP] + H2O. In terms of biological role, involved in unsaturated fatty acids biosynthesis. Catalyzes the dehydration of short chain beta-hydroxyacyl-ACPs and long chain saturated and unsaturated beta-hydroxyacyl-ACPs. The sequence is that of 3-hydroxyacyl-[acyl-carrier-protein] dehydratase FabZ from Prochlorococcus marinus (strain MIT 9301).